A 1391-amino-acid chain; its full sequence is MNLLNLFNPLQTAGMEEEFDAIKIGIASPETIRSWSYGEVKKPETINYRTFKPERDGLFCAKIFGPVKDYECLCGKYKRLKFKGVTCEKCGVEVTLSKVRRERMGHIELAAPVAHIWFLKSLPSRLGMVLDMTLRDIERVLYFEAFVVTDPGMTPLQRRQLLTEDDYYNKLDEYGDDFDAKMGAEGIRELLRTLNVAGEIEILRQELESTGSDTKIKKIAKRLKVLEAFHRSGMKLEWMIMDVLPVLPPDLRPLVPLDGGRFATSDLNDLYRRVINRNNRLKRLLELHAPDIIVRNEKRMLQEAVDSLLDNGRRGKAMTGANKRPLKSLADMIKGKGGRFRQNLLGKRVDYSGRSVITVGPYLRLHQCGLPKKMALELFKPFIFHKLEKQGLASTVKAAKKLVEQEVPEVWDILEEVIREHPIMLNRAPTLHRLGIQAFEPILIEGKAIQLHPLVCAAFNADFDGDQMAVHVPLSLEAQMEARTLMLASNNVLSPANGEPIIVPSQDIVLGLYYMTRDRINAKGEGSLFADVKEVHRAYHTKQVELGTKITVRLREWVKNEAGEFEPVVNRYETTVGRALLSEILPKGLPFEYVNKALKKKEISKLINASFRLCGLRDTVIFADHLMYTGFGFAAKGGISIAVDDMEIPKEKAALLAEANAEVKEIEDQYRQGLVTNGERYNKVVDIWGRAGDKIAKAMMDNLSKQKVIDRAGNEVDQESFNSIYMMADSGARGSAAQIKQLSGMRGLMAKPDGSIIETPITSNFREGLTVLQYFIATHGARKGLADTALKTANSGYLTRRLVDVTQDLVVVEDDCGTSDGFVMKAVVQGGDVIEALRDRILGRVTASDVVDPSSGETLVEAGTLLTEKLVDMIDQSGVDEVKVRTPITCKTRHGLCAHCYGRDLARGKLVNAGEAVGVIAAQSIGEPGTQLTMRTFHIGGAASRAAAASQVEAKSNGTARFSSQMRYVANNKGELVVIGRSCEVVIHDDIGRERERHKVPYGAILLVQDGMAIKAGQTLATWDPHTRPMITEHAGMVKFENVEEGVTVAKQTDDVTGLSTLVVIDGKRRSSSASKLLRPTVKLLDENGVEICIPGTSTPVSMAFPVGAVITVREGQEIGKGDVLARIPQASSKTRDITGGLPRVAELFEARVPKDAGMLAEITGTVSFGKETKGKQRLIVTDVDGVAYETLISKEKQILVHDGQVVNRGETIVDGAVDPHDILRLQGIEALARYIVQEVQEVYRLQGVKISDKHIEVIIRQMLRRVNIADAGETGFITGEQVERGDVMLANEKALEEGKEPARYENVLLGITKASLSTDSFISAASFQETTRVLTEAAIMGKQDELRGLKENVIVGRLIPAGTGLTYHRSRHQQWQEVEQETAETQVTDE.

Zn(2+)-binding residues include Cys72, Cys74, Cys87, and Cys90. Mg(2+) is bound by residues Asp462, Asp464, and Asp466. Residues Cys816, Cys890, Cys897, and Cys900 each contribute to the Zn(2+) site.

The protein belongs to the RNA polymerase beta' chain family. As to quaternary structure, the RNAP catalytic core consists of 2 alpha, 1 beta, 1 beta' and 1 omega subunit. When a sigma factor is associated with the core the holoenzyme is formed, which can initiate transcription. Mg(2+) serves as cofactor. Zn(2+) is required as a cofactor.

It carries out the reaction RNA(n) + a ribonucleoside 5'-triphosphate = RNA(n+1) + diphosphate. DNA-dependent RNA polymerase catalyzes the transcription of DNA into RNA using the four ribonucleoside triphosphates as substrates. In Neisseria meningitidis serogroup C (strain 053442), this protein is DNA-directed RNA polymerase subunit beta'.